Reading from the N-terminus, the 155-residue chain is Molybdopterin synthase catalytic subunit 1 (155 aa).

Substrate contacts are provided by residues 101 to 102 (HR), K117, and 124 to 126 (KKE).

Belongs to the MoaE family. MOCS2B subfamily. In terms of assembly, heterotetramer; composed of 2 small (MOCS2A) and 2 large (MOCS2B) subunits.

It is found in the cytoplasm. It carries out the reaction 2 [molybdopterin-synthase sulfur-carrier protein]-C-terminal-Gly-aminoethanethioate + cyclic pyranopterin phosphate + H2O = molybdopterin + 2 [molybdopterin-synthase sulfur-carrier protein]-C-terminal Gly-Gly + 2 H(+). Its pathway is cofactor biosynthesis; molybdopterin biosynthesis. Its function is as follows. Catalytic subunit of the molybdopterin synthase complex, a complex that catalyzes the conversion of precursor Z into molybdopterin. Acts by mediating the incorporation of 2 sulfur atoms from thiocarboxylated MOCS2A into precursor Z to generate a dithiolene group. This is Molybdopterin synthase catalytic subunit 1 from Aedes aegypti (Yellowfever mosquito).